The primary structure comprises 416 residues: Multifunctional CCA protein (416 aa).

ATP is bound by residues G8 and R11. G8 and R11 together coordinate CTP. Mg(2+) contacts are provided by D21 and D23. ATP contacts are provided by R91, R138, and R141. R91, R138, and R141 together coordinate CTP. In terms of domain architecture, HD spans 229 to 331 (TGLHQELVSD…YELLQRCDAF (103 aa)).

It belongs to the tRNA nucleotidyltransferase/poly(A) polymerase family. Bacterial CCA-adding enzyme type 1 subfamily. Monomer. Can also form homodimers and oligomers. Mg(2+) is required as a cofactor. It depends on Ni(2+) as a cofactor.

The enzyme catalyses a tRNA precursor + 2 CTP + ATP = a tRNA with a 3' CCA end + 3 diphosphate. It carries out the reaction a tRNA with a 3' CCA end + 2 CTP + ATP = a tRNA with a 3' CCACCA end + 3 diphosphate. Catalyzes the addition and repair of the essential 3'-terminal CCA sequence in tRNAs without using a nucleic acid template. Adds these three nucleotides in the order of C, C, and A to the tRNA nucleotide-73, using CTP and ATP as substrates and producing inorganic pyrophosphate. tRNA 3'-terminal CCA addition is required both for tRNA processing and repair. Also involved in tRNA surveillance by mediating tandem CCA addition to generate a CCACCA at the 3' terminus of unstable tRNAs. While stable tRNAs receive only 3'-terminal CCA, unstable tRNAs are marked with CCACCA and rapidly degraded. This is Multifunctional CCA protein from Xylella fastidiosa (strain M12).